A 243-amino-acid chain; its full sequence is UPF0758 protein SYNPCC7002_A0220 (243 aa).

An MPN domain is found at 112–235 (IIVDSPEAAA…FGSLRQKTAL (124 aa)). Residues His-184, His-186, and Asp-197 each coordinate Zn(2+). Residues 184 to 197 (HNHPSGNVDPSPED) carry the JAMM motif motif.

The protein belongs to the UPF0758 family.

The sequence is that of UPF0758 protein SYNPCC7002_A0220 from Picosynechococcus sp. (strain ATCC 27264 / PCC 7002 / PR-6) (Agmenellum quadruplicatum).